Consider the following 232-residue polypeptide: PsbP domain-containing protein 2, chloroplastic (232 aa).

A chloroplast-targeting transit peptide spans 1–34 (MWSQSFLGSAPKLCLFSSSLPPFSHHKIHKFFCF). Residues 35 to 71 (AQNPSSTVSINLSKRHLNLSILTLFFNGFLLDNKAKS) constitute a thylakoid transit peptide.

The protein belongs to the PsbP family.

It localises to the plastid. Its subcellular location is the chloroplast thylakoid lumen. The sequence is that of PsbP domain-containing protein 2, chloroplastic (PPD2) from Arabidopsis thaliana (Mouse-ear cress).